The sequence spans 265 residues: 3-deoxy-manno-octulosonate cytidylyltransferase 2 (265 aa).

Belongs to the KdsB family.

It is found in the cytoplasm. It carries out the reaction 3-deoxy-alpha-D-manno-oct-2-ulosonate + CTP = CMP-3-deoxy-beta-D-manno-octulosonate + diphosphate. Its pathway is nucleotide-sugar biosynthesis; CMP-3-deoxy-D-manno-octulosonate biosynthesis; CMP-3-deoxy-D-manno-octulosonate from 3-deoxy-D-manno-octulosonate and CTP: step 1/1. The protein operates within bacterial outer membrane biogenesis; lipopolysaccharide biosynthesis. Its function is as follows. Activates KDO (a required 8-carbon sugar) for incorporation into bacterial lipopolysaccharide in Gram-negative bacteria. The sequence is that of 3-deoxy-manno-octulosonate cytidylyltransferase 2 from Burkholderia lata (strain ATCC 17760 / DSM 23089 / LMG 22485 / NCIMB 9086 / R18194 / 383).